Reading from the N-terminus, the 83-residue chain is Mu-theraphotoxin-Hhn2j 1 (83 aa).

The signal sequence occupies residues 1–21 (MKASMFLALAGLVLLFVVGYA). Positions 22–48 (SESEEKEFPIELLSKIFAVDVFKGEER) are excised as a propeptide. Cystine bridges form between C50/C65, C57/C70, and C64/C77. At L81 the chain carries Leucine amide.

This sequence belongs to the neurotoxin 10 (Hwtx-1) family. 15 (Hntx-3) subfamily. Monomer. Expressed by the venom gland.

Its subcellular location is the secreted. Functionally, lethal neurotoxin. Selectively blocks tetrodotoxin-sensitive voltage-gated sodium channels (Nav). Does not affect tetrodotoxin-resistant voltage-gated sodium channels or calcium channels. In Cyriopagopus hainanus (Chinese bird spider), this protein is Mu-theraphotoxin-Hhn2j 1.